The chain runs to 216 residues: Ribose-5-phosphate isomerase A (216 aa).

Residues 26–29, 79–82, and 92–95 contribute to the substrate site; these read TGST, DGAD, and KGGG. The active-site Proton acceptor is the Glu101. Lys119 is a substrate binding site.

This sequence belongs to the ribose 5-phosphate isomerase family. As to quaternary structure, homodimer.

The enzyme catalyses aldehydo-D-ribose 5-phosphate = D-ribulose 5-phosphate. The protein operates within carbohydrate degradation; pentose phosphate pathway; D-ribose 5-phosphate from D-ribulose 5-phosphate (non-oxidative stage): step 1/1. Its function is as follows. Catalyzes the reversible conversion of ribose-5-phosphate to ribulose 5-phosphate. The sequence is that of Ribose-5-phosphate isomerase A from Legionella pneumophila subsp. pneumophila (strain Philadelphia 1 / ATCC 33152 / DSM 7513).